The sequence spans 84 residues: Mu-conotoxin-like Cal 12.2d (84 aa).

A signal peptide spans 1 to 19 (MKLTCVLVVLLLVLPFGDL). The propeptide occupies 20 to 42 (ITTSNTEDNKRGATPWQNSLKAR). W72 is subject to 6'-bromotryptophan. Position 77 is a 4-hydroxyproline (P77). W81 carries the 6'-bromotryptophan modification.

This sequence belongs to the conotoxin O1 superfamily. In terms of processing, contains 4 disulfide bonds. As to expression, expressed by the venom duct.

Its subcellular location is the secreted. In terms of biological role, mu-conotoxins block voltage-gated sodium channels. This toxin reversibly blocks voltage-gated sodium channel in cephalopods, with no alteration in the voltage dependence of sodium conductance or on the kinetics of inactivation. The chain is Mu-conotoxin-like Cal 12.2d from Californiconus californicus (California cone).